Reading from the N-terminus, the 396-residue chain is NADH-quinone oxidoreductase subunit D (396 aa).

Belongs to the complex I 49 kDa subunit family. NDH-1 is composed of 14 different subunits. Subunits NuoB, C, D, E, F, and G constitute the peripheral sector of the complex.

Its subcellular location is the cell inner membrane. The enzyme catalyses a quinone + NADH + 5 H(+)(in) = a quinol + NAD(+) + 4 H(+)(out). In terms of biological role, NDH-1 shuttles electrons from NADH, via FMN and iron-sulfur (Fe-S) centers, to quinones in the respiratory chain. The immediate electron acceptor for the enzyme in this species is believed to be ubiquinone. Couples the redox reaction to proton translocation (for every two electrons transferred, four hydrogen ions are translocated across the cytoplasmic membrane), and thus conserves the redox energy in a proton gradient. The polypeptide is NADH-quinone oxidoreductase subunit D (Orientia tsutsugamushi (strain Boryong) (Rickettsia tsutsugamushi)).